Reading from the N-terminus, the 612-residue chain is Dihydroxy-acid dehydratase (612 aa).

Mg(2+) is bound at residue aspartate 81. Cysteine 122 is a [2Fe-2S] cluster binding site. The Mg(2+) site is built by aspartate 123 and lysine 124. Lysine 124 is subject to N6-carboxylysine. Residue cysteine 193 coordinates [2Fe-2S] cluster. Position 489 (glutamate 489) interacts with Mg(2+). Serine 515 acts as the Proton acceptor in catalysis.

It belongs to the IlvD/Edd family. Homodimer. The cofactor is [2Fe-2S] cluster. Mg(2+) serves as cofactor.

It carries out the reaction (2R)-2,3-dihydroxy-3-methylbutanoate = 3-methyl-2-oxobutanoate + H2O. The catalysed reaction is (2R,3R)-2,3-dihydroxy-3-methylpentanoate = (S)-3-methyl-2-oxopentanoate + H2O. It participates in amino-acid biosynthesis; L-isoleucine biosynthesis; L-isoleucine from 2-oxobutanoate: step 3/4. The protein operates within amino-acid biosynthesis; L-valine biosynthesis; L-valine from pyruvate: step 3/4. In terms of biological role, functions in the biosynthesis of branched-chain amino acids. Catalyzes the dehydration of (2R,3R)-2,3-dihydroxy-3-methylpentanoate (2,3-dihydroxy-3-methylvalerate) into 2-oxo-3-methylpentanoate (2-oxo-3-methylvalerate) and of (2R)-2,3-dihydroxy-3-methylbutanoate (2,3-dihydroxyisovalerate) into 2-oxo-3-methylbutanoate (2-oxoisovalerate), the penultimate precursor to L-isoleucine and L-valine, respectively. The chain is Dihydroxy-acid dehydratase from Xanthomonas axonopodis pv. citri (strain 306).